A 90-amino-acid chain; its full sequence is Probable Fe(2+)-trafficking protein (90 aa).

This sequence belongs to the Fe(2+)-trafficking protein family.

Functionally, could be a mediator in iron transactions between iron acquisition and iron-requiring processes, such as synthesis and/or repair of Fe-S clusters in biosynthetic enzymes. The chain is Probable Fe(2+)-trafficking protein from Pseudoalteromonas atlantica (strain T6c / ATCC BAA-1087).